Reading from the N-terminus, the 188-residue chain is Ribosome maturation factor RimM (188 aa).

The 74-residue stretch at 98 to 171 (EGEFFQGDLV…RIVIHPPEYV (74 aa)) folds into the PRC barrel domain.

It belongs to the RimM family. In terms of assembly, binds ribosomal protein uS19.

It is found in the cytoplasm. An accessory protein needed during the final step in the assembly of 30S ribosomal subunit, possibly for assembly of the head region. Essential for efficient processing of 16S rRNA. May be needed both before and after RbfA during the maturation of 16S rRNA. It has affinity for free ribosomal 30S subunits but not for 70S ribosomes. This chain is Ribosome maturation factor RimM, found in Myxococcus xanthus (strain DK1622).